Consider the following 334-residue polypeptide: Syntaxin-18 (334 aa).

At 1–308 (MAVDITLLFR…EDIREAIKNN (308 aa)) the chain is on the cytoplasmic side. Disordered regions lie at residues 29–50 (GGAD…GDFS) and 166–225 (LSKL…GEDE). Composition is skewed to basic and acidic residues over residues 33–50 (GSRD…GDFS), 166–186 (LSKL…EKSS), and 193–207 (SEEK…EKPL). The 63-residue stretch at 242 to 304 (IGEMNSLFDE…KEGNEDIREA (63 aa)) folds into the t-SNARE coiled-coil homology domain. The chain crosses the membrane as a helical; Anchor for type IV membrane protein span at residues 309-329 (AGFRVWILFFLVMCSFSLLFL). Residues 330 to 334 (DWYDS) are Vesicular-facing.

This sequence belongs to the syntaxin family. As to quaternary structure, component of a SNARE complex consisting of STX18, USE1L, BNIP1/SEC20L, and SEC22B. RINT1/TIP20L and ZW10 are associated with the complex through interaction with BNIP1/SEC20L. Interacts directly with USE1L and BNIP1/SEC20L.

The protein resides in the endoplasmic reticulum membrane. The protein localises to the golgi apparatus membrane. Its function is as follows. Syntaxin that may be involved in targeting and fusion of Golgi-derived retrograde transport vesicles with the ER. The polypeptide is Syntaxin-18 (Stx18) (Rattus norvegicus (Rat)).